The sequence spans 563 residues: MIRATAMHRSIVQRRMLSTASRLQQAAKPATGSTVGTANGASAASGKPPGATFEGASKQKKKTHKFRNFVLLSTFVGAGAFAGGVYYSLQNDQFQSLFVEYVPAAEHAINYIEEQQLRSGRLKIATPTSKHDVDQSTVRVPKSGATWRAVDSTDAATSAKSASSPAANVAKDVASPAPAATASPVSSGSPKTDNTTVPAVRLANDSDPAVKAAVQTFNDLIAVAPSGAAKQLSAKVSTVVDQLQHNVAQIKSEAAEEAKNSINKLNSELAKLKASTGEEISSKVSAAEQQLRNEFAALRAHSEKVYHDRLRVEIEATKSLVSSHANNLIQAVEAERQKQYAQEIAERVETEREGRLSKLKDLQTSLTQLQDLALKTEQAVDASGRTAALHLAIAKLTGALKGSEPVALGPYVESIRRAAGDDPLLQAALDSIPEVAQTEGVLTPAQLTIRFKLLEPELRKSSLVPVNAGVAGHLGSLIFSSLLFKKSGVPKGDDVESVLARANIALEQGKLYDAVAEVNTLKGWPRKLASDWLDEGRRRTEIEFLADVIAEEGKLYGALSSKK.

The N-terminal 17 residues, 1 to 17, are a transit peptide targeting the mitochondrion; that stretch reads MIRATAMHRSIVQRRML. At 18–68 the chain is on the mitochondrial matrix side; sequence STASRLQQAAKPATGSTVGTANGASAASGKPPGATFEGASKQKKKTHKFRN. Residues 23 to 59 are disordered; sequence LQQAAKPATGSTVGTANGASAASGKPPGATFEGASKQ. Positions 38–51 are enriched in low complexity; the sequence is ANGASAASGKPPGA. The helical transmembrane segment at 69 to 89 threads the bilayer; it reads FVLLSTFVGAGAFAGGVYYSL. The Mitochondrial intermembrane portion of the chain corresponds to 90 to 563; sequence QNDQFQSLFV…KLYGALSSKK (474 aa). Disordered stretches follow at residues 128 to 170 and 178 to 197; these read TSKH…ANVA and PAAT…NTTV. Low complexity-rich tracts occupy residues 149–170 and 178–190; these read AVDS…ANVA and PAAT…SGSP. The stretch at 239–379 forms a coiled coil; the sequence is VVDQLQHNVA…QDLALKTEQA (141 aa).

It belongs to the MICOS complex subunit Mic60 family. As to quaternary structure, component of the mitochondrial contact site and cristae organizing system (MICOS) complex.

Its subcellular location is the mitochondrion inner membrane. Functionally, component of the MICOS complex, a large protein complex of the mitochondrial inner membrane that plays crucial roles in the maintenance of crista junctions, inner membrane architecture, and formation of contact sites to the outer membrane. Plays a role in keeping cristae membranes connected to the inner boundary membrane. Also promotes protein import via the mitochondrial intermembrane space assembly (MIA) pathway. The chain is MICOS complex subunit MIC60 (MIC60) from Yarrowia lipolytica (strain CLIB 122 / E 150) (Yeast).